A 341-amino-acid polypeptide reads, in one-letter code: MSESALNTAIQAIARGLPLEESVLEGAFDTLLSGEAAPEEVGAFLAGLTVRGETANELIAGARIMRRHGRSVSVEGPLLDTCGTGGLPWKSLNTSTASAIVIAAAGGRVAKHGNRSVPPKTGSADVLEALGLQLELSDTAFKSCLEIAGVGFLFARSYHSAMRHVAPIRHKLGIRTIFNLLGPLSNPAGAEYSVLGVYDKQWVTPMAEALKALGTRCAWVVHGLAGIDEISISGPTDVCEVTPASIRHFQITPSDAGLPSHPLSTLEGGAPEENTAAIRDLLDGREGPFRDIVLINAAAGLHVSGMVADLPAGVQRAAQAIDSGAARETLNTLVRTSRESD.

Residues G83, S91, 93–96 (NTST), 111–115 (KHGNR), and S123 each bind 5-phospho-alpha-D-ribose 1-diphosphate. Anthranilate is bound at residue G83. Position 95 (S95) interacts with Mg(2+). An anthranilate-binding site is contributed by N114. R169 is an anthranilate binding site. Residues D228 and E229 each contribute to the Mg(2+) site.

This sequence belongs to the anthranilate phosphoribosyltransferase family. Homodimer. The cofactor is Mg(2+).

The enzyme catalyses N-(5-phospho-beta-D-ribosyl)anthranilate + diphosphate = 5-phospho-alpha-D-ribose 1-diphosphate + anthranilate. It functions in the pathway amino-acid biosynthesis; L-tryptophan biosynthesis; L-tryptophan from chorismate: step 2/5. Catalyzes the transfer of the phosphoribosyl group of 5-phosphorylribose-1-pyrophosphate (PRPP) to anthranilate to yield N-(5'-phosphoribosyl)-anthranilate (PRA). This is Anthranilate phosphoribosyltransferase from Hyphomonas neptunium (strain ATCC 15444).